The following is a 438-amino-acid chain: UDP-N-acetylmuramoylalanine--D-glutamate ligase (438 aa).

112–118 provides a ligand contact to ATP; sequence GSNGKST.

The protein belongs to the MurCDEF family.

The protein localises to the cytoplasm. The catalysed reaction is UDP-N-acetyl-alpha-D-muramoyl-L-alanine + D-glutamate + ATP = UDP-N-acetyl-alpha-D-muramoyl-L-alanyl-D-glutamate + ADP + phosphate + H(+). The protein operates within cell wall biogenesis; peptidoglycan biosynthesis. In terms of biological role, cell wall formation. Catalyzes the addition of glutamate to the nucleotide precursor UDP-N-acetylmuramoyl-L-alanine (UMA). In Escherichia coli O6:K15:H31 (strain 536 / UPEC), this protein is UDP-N-acetylmuramoylalanine--D-glutamate ligase.